The following is a 1184-amino-acid chain: DNA-directed RNA polymerase subunit beta' (1184 aa).

Zn(2+)-binding residues include C60, C62, C75, and C78. Mg(2+) is bound by residues D449, D451, and D453. 4 residues coordinate Zn(2+): C794, C867, C874, and C877.

The protein belongs to the RNA polymerase beta' chain family. The RNAP catalytic core consists of 2 alpha, 1 beta, 1 beta' and 1 omega subunit. When a sigma factor is associated with the core the holoenzyme is formed, which can initiate transcription. It depends on Mg(2+) as a cofactor. Zn(2+) serves as cofactor.

The catalysed reaction is RNA(n) + a ribonucleoside 5'-triphosphate = RNA(n+1) + diphosphate. Its function is as follows. DNA-dependent RNA polymerase catalyzes the transcription of DNA into RNA using the four ribonucleoside triphosphates as substrates. This Thermoanaerobacter sp. (strain X514) protein is DNA-directed RNA polymerase subunit beta'.